The following is a 168-amino-acid chain: Ribosome maturation factor RimM (168 aa).

Residues 96–168 enclose the PRC barrel domain; it reads EGDYYWTDLI…IIVVEWDADF (73 aa).

It belongs to the RimM family. As to quaternary structure, binds ribosomal protein uS19.

The protein resides in the cytoplasm. Its function is as follows. An accessory protein needed during the final step in the assembly of 30S ribosomal subunit, possibly for assembly of the head region. Essential for efficient processing of 16S rRNA. May be needed both before and after RbfA during the maturation of 16S rRNA. It has affinity for free ribosomal 30S subunits but not for 70S ribosomes. This is Ribosome maturation factor RimM from Coxiella burnetii (strain RSA 331 / Henzerling II).